The primary structure comprises 128 residues: Ribosome-binding factor A (128 aa).

Belongs to the RbfA family. Monomer. Binds 30S ribosomal subunits, but not 50S ribosomal subunits or 70S ribosomes.

Its subcellular location is the cytoplasm. One of several proteins that assist in the late maturation steps of the functional core of the 30S ribosomal subunit. Associates with free 30S ribosomal subunits (but not with 30S subunits that are part of 70S ribosomes or polysomes). Required for efficient processing of 16S rRNA. May interact with the 5'-terminal helix region of 16S rRNA. In Idiomarina loihiensis (strain ATCC BAA-735 / DSM 15497 / L2-TR), this protein is Ribosome-binding factor A.